The sequence spans 1070 residues: DNA-directed RNA polymerase subunit beta (1070 aa).

It belongs to the RNA polymerase beta chain family. As to quaternary structure, in plastids the minimal PEP RNA polymerase catalytic core is composed of four subunits: alpha, beta, beta', and beta''. When a (nuclear-encoded) sigma factor is associated with the core the holoenzyme is formed, which can initiate transcription.

It localises to the plastid. It is found in the chloroplast. It carries out the reaction RNA(n) + a ribonucleoside 5'-triphosphate = RNA(n+1) + diphosphate. Its function is as follows. DNA-dependent RNA polymerase catalyzes the transcription of DNA into RNA using the four ribonucleoside triphosphates as substrates. In Cucumis sativus (Cucumber), this protein is DNA-directed RNA polymerase subunit beta.